Consider the following 161-residue polypeptide: RNA pyrophosphohydrolase (161 aa).

Residues 12-154 (PYRPGVGMMI…KRKLYQAVVK (143 aa)) form the Nudix hydrolase domain. Positions 46–67 (GGIVPGETPSIAAMREMLEEIG) match the Nudix box motif.

The protein belongs to the Nudix hydrolase family. RppH subfamily. A divalent metal cation is required as a cofactor.

Accelerates the degradation of transcripts by removing pyrophosphate from the 5'-end of triphosphorylated RNA, leading to a more labile monophosphorylated state that can stimulate subsequent ribonuclease cleavage. In Rickettsia canadensis (strain McKiel), this protein is RNA pyrophosphohydrolase.